Consider the following 449-residue polypeptide: MTRLFGTDGVRGLAGRDLTAGLTLELAIAAAEVLPERGIPGKRPRAVVGRDPRASGEFLEAAVVAGLASAGVDVIRLGVLPTPAVAFLTGELDADFGVMLSASHNPAPDNGIKFFARGGHKLSDEVEDEIERRLGRAVAGATGRDVGRVTDDTDSVERYITHLVNSLPNRLDGLKVVVDCANGAAAGIAPEALRRAGADVIAIGDKPDGFNINEGCGSTNLDALRAAVLEHGADAGIAHDGDADRCQAVAADGSVVDGDQIMAVLALELYEANALHNNTLVVTVMSNLGLKLAMKEAGITLVETQVGDRYVLEAMRAGSYSLGGEQSGHIILLDHATTGDGLLTGMHLLAAVNRRGVALAELAKVMNRLPQVLVNVSGVDKTRVATSERIAAEVAAAEAELGDSGRVLLRPSGTEPIVRVMVEATSQDRAQAIADRLADVVRDELSINA.

Residue Ser103 is the Phosphoserine intermediate of the active site. Positions 103, 240, 242, and 244 each coordinate Mg(2+). Ser103 bears the Phosphoserine mark.

This sequence belongs to the phosphohexose mutase family. The cofactor is Mg(2+). In terms of processing, activated by phosphorylation.

The catalysed reaction is alpha-D-glucosamine 1-phosphate = D-glucosamine 6-phosphate. Catalyzes the conversion of glucosamine-6-phosphate to glucosamine-1-phosphate. The sequence is that of Phosphoglucosamine mutase from Thermobifida fusca (strain YX).